Consider the following 146-residue polypeptide: Large ribosomal subunit protein uL15 (146 aa).

Residues 1–10 (MTLKLHDLRP) are compositionally biased toward basic and acidic residues. The segment at 1-41 (MTLKLHDLRPARGSKTARTRVGRGDGSKGKTAGRGTKGTRA) is disordered.

Belongs to the universal ribosomal protein uL15 family. Part of the 50S ribosomal subunit.

Binds to the 23S rRNA. This chain is Large ribosomal subunit protein uL15, found in Mycobacterium bovis (strain BCG / Pasteur 1173P2).